The primary structure comprises 54 residues: Ribulose bisphosphate carboxylase large chain (54 aa).

The propeptide occupies 1-2 (MS). Pro-3 is subject to N-acetylproline. Lys-14 is subject to N6,N6,N6-trimethyllysine.

This sequence belongs to the RuBisCO large chain family. Type I subfamily. As to quaternary structure, heterohexadecamer of 8 large chains and 8 small chains.

It localises to the plastid. The protein localises to the chloroplast. The enzyme catalyses 2 (2R)-3-phosphoglycerate + 2 H(+) = D-ribulose 1,5-bisphosphate + CO2 + H2O. It carries out the reaction D-ribulose 1,5-bisphosphate + O2 = 2-phosphoglycolate + (2R)-3-phosphoglycerate + 2 H(+). In terms of biological role, ruBisCO catalyzes two reactions: the carboxylation of D-ribulose 1,5-bisphosphate, the primary event in carbon dioxide fixation, as well as the oxidative fragmentation of the pentose substrate in the photorespiration process. Both reactions occur simultaneously and in competition at the same active site. In Geum borisii (Avens), this protein is Ribulose bisphosphate carboxylase large chain (rbcL).